The sequence spans 237 residues: MRKTPLALSAVFLLLSLNQSAFAKEPAPAPLWPGVNVAQLAQQSPVHWVSVAQIENSLNGRPPIAVGFDIDDTVLFSSPGFYRGQVEFSPGKQDYLKNPKFWEKMNNGWDDFSMPKEVAKSLIAMHLKRGDSIYFVTGRSETKTETVTKTLQNDFQIPQDKVNAVIFAGDKAGQNTKTQWLKDKQIKVFYGDSDNDITAAQSVSARGIRVLRASNSSYKPLPQAGAFGEEVIVNSEY.

A signal peptide spans 1-23 (MRKTPLALSAVFLLLSLNQSAFA). The active-site Nucleophile is D69. Mg(2+) is bound by residues D69 and D71. Residue D71 is the Proton donor of the active site. Substrate-binding positions include 137-138 (TG) and K177. D192 is a binding site for Mg(2+).

Belongs to the class B bacterial acid phosphatase family. Homotetramer. The cofactor is Mg(2+).

It localises to the periplasm. It carries out the reaction a phosphate monoester + H2O = an alcohol + phosphate. Dephosphorylates several organic phosphate monoesters. Also has a phosphotransferase activity catalyzing the transfer of low-energy phosphate groups from organic phosphate monoesters to free hydroxyl groups of various organic compounds. This chain is Class B acid phosphatase, found in Rahnella sp. (strain Y9602).